Here is a 529-residue protein sequence, read N- to C-terminus: Probable E3 ubiquitin-protein ligase MGRN1 (529 aa).

Residues 275 to 314 form an RING-type zinc finger; the sequence is ECVVCLSDLRDTLILPCRHLCLCNACADTLRYQANNCPIC. Disordered regions lie at residues 341–362 and 396–529; these read SPVLSQSSDHTEHSNADNIPPG and EMGD…VEEC. 2 stretches are compositionally biased toward polar residues: residues 449-463 and 477-487; these read AQPQSVLPCSLSPSE and NSGSESRSLGV. The span at 501–511 shows a compositional bias: low complexity; sequence SSLSQSESDPS. The span at 520–529 shows a compositional bias: polar residues; sequence ESWSTAVEEC.

Autoubiquitinated in vitro.

It catalyses the reaction S-ubiquitinyl-[E2 ubiquitin-conjugating enzyme]-L-cysteine + [acceptor protein]-L-lysine = [E2 ubiquitin-conjugating enzyme]-L-cysteine + N(6)-ubiquitinyl-[acceptor protein]-L-lysine.. It participates in protein modification; protein ubiquitination. Its function is as follows. E3 ubiquitin-protein ligase. Also acts as a negative regulator of hedgehog signaling. This Danio rerio (Zebrafish) protein is Probable E3 ubiquitin-protein ligase MGRN1 (mgrn1).